The primary structure comprises 374 residues: DNA-directed RNA polymerase subunit alpha (374 aa).

Residues 1–270 are alpha N-terminal domain (alpha-NTD); sequence MIFDEDSSSV…DQFQQFINFD (270 aa). The tract at residues 282–374 is alpha C-terminal domain (alpha-CTD); sequence KDVLPYDSNL…ESLSKQYSEE (93 aa).

The protein belongs to the RNA polymerase alpha chain family. In terms of assembly, homodimer. The RNAP catalytic core consists of 2 alpha, 1 beta, 1 beta' and 1 omega subunit. When a sigma factor is associated with the core the holoenzyme is formed, which can initiate transcription.

The catalysed reaction is RNA(n) + a ribonucleoside 5'-triphosphate = RNA(n+1) + diphosphate. Its function is as follows. DNA-dependent RNA polymerase catalyzes the transcription of DNA into RNA using the four ribonucleoside triphosphates as substrates. The sequence is that of DNA-directed RNA polymerase subunit alpha from Ehrlichia ruminantium (strain Welgevonden).